The following is an 869-amino-acid chain: Bifunctional uridylyltransferase/uridylyl-removing enzyme (869 aa).

Residues 1–332 are uridylyltransferase; it reads MTATPADRPD…QFDGEAVPVQ (332 aa). The segment at 333–691 is uridylyl-removing; it reads LDAGFSLRRG…RRAVPDNDAL (359 aa). The 123-residue stretch at 450 to 572 folds into the HD domain; that stretch reads VDQHTLMVLR…VGTRERLDYL (123 aa). 2 consecutive ACT domains span residues 692–771 and 798–869; these read EVFV…PSRR and RISL…LDPT.

Belongs to the GlnD family. It depends on Mg(2+) as a cofactor.

The catalysed reaction is [protein-PII]-L-tyrosine + UTP = [protein-PII]-uridylyl-L-tyrosine + diphosphate. It carries out the reaction [protein-PII]-uridylyl-L-tyrosine + H2O = [protein-PII]-L-tyrosine + UMP + H(+). With respect to regulation, uridylyltransferase (UTase) activity is inhibited by glutamine, while glutamine activates uridylyl-removing (UR) activity. Its function is as follows. Modifies, by uridylylation and deuridylylation, the PII regulatory proteins (GlnB and homologs), in response to the nitrogen status of the cell that GlnD senses through the glutamine level. Under low glutamine levels, catalyzes the conversion of the PII proteins and UTP to PII-UMP and PPi, while under higher glutamine levels, GlnD hydrolyzes PII-UMP to PII and UMP (deuridylylation). Thus, controls uridylylation state and activity of the PII proteins, and plays an important role in the regulation of nitrogen assimilation and metabolism. This Xanthomonas campestris pv. campestris (strain B100) protein is Bifunctional uridylyltransferase/uridylyl-removing enzyme.